The following is a 310-amino-acid chain: Glutaminase 1 (310 aa).

Serine 66, asparagine 117, glutamate 161, asparagine 168, tyrosine 192, tyrosine 244, and valine 262 together coordinate substrate. The residue at position 294 (lysine 294) is an N6-acetyllysine.

It belongs to the glutaminase family. Homotetramer.

It carries out the reaction L-glutamine + H2O = L-glutamate + NH4(+). The polypeptide is Glutaminase 1 (Escherichia coli O6:H1 (strain CFT073 / ATCC 700928 / UPEC)).